The primary structure comprises 99 residues: C-C motif chemokine 17 (99 aa).

An N-terminal signal peptide occupies residues 1-23 (MIPLKMLLLVTLLLGASLQVTHA). 2 disulfides stabilise this stretch: C33–C57 and C34–C73.

The protein belongs to the intercrine beta (chemokine CC) family. In terms of tissue distribution, expressed in thymus, spleen, lymph node, lung and heart.

It localises to the secreted. Its function is as follows. Chemokine, which displays chemotactic activity for T lymphocytes, preferentially Th2 cells, but not monocytes or granulocytes. Therefore plays an important role in a wide range of inflammatory and immunological processes. Acts by binding to CCR4 at T-cell surface. Mediates GM-CSF/CSF2-driven pain and inflammation. In the brain, required to maintain the typical, highly branched morphology of hippocampal microglia under homeostatic conditions. May be important for the appropriate adaptation of microglial morphology and synaptic plasticity to acute lipopolysaccharide (LPS)-induced neuroinflammation. Plays a role in wound healing, mainly by inducing fibroblast migration into the wound. This chain is C-C motif chemokine 17 (CCL17), found in Canis lupus familiaris (Dog).